The sequence spans 318 residues: Acetyl-coenzyme A carboxylase carboxyl transferase subunit alpha (318 aa).

The CoA carboxyltransferase C-terminal domain maps to 32 to 293 (NLSDELERLR…KERLVSQLDR (262 aa)).

This sequence belongs to the AccA family. Acetyl-CoA carboxylase is a heterohexamer composed of biotin carboxyl carrier protein (AccB), biotin carboxylase (AccC) and two subunits each of ACCase subunit alpha (AccA) and ACCase subunit beta (AccD).

It localises to the cytoplasm. The enzyme catalyses N(6)-carboxybiotinyl-L-lysyl-[protein] + acetyl-CoA = N(6)-biotinyl-L-lysyl-[protein] + malonyl-CoA. It functions in the pathway lipid metabolism; malonyl-CoA biosynthesis; malonyl-CoA from acetyl-CoA: step 1/1. Functionally, component of the acetyl coenzyme A carboxylase (ACC) complex. First, biotin carboxylase catalyzes the carboxylation of biotin on its carrier protein (BCCP) and then the CO(2) group is transferred by the carboxyltransferase to acetyl-CoA to form malonyl-CoA. The chain is Acetyl-coenzyme A carboxylase carboxyl transferase subunit alpha from Saccharophagus degradans (strain 2-40 / ATCC 43961 / DSM 17024).